Reading from the N-terminus, the 624-residue chain is Chaperone protein DnaK (624 aa).

Position 174 is a phosphothreonine; by autocatalysis (T174). 2 disordered regions span residues 470-504 (ITIKSSSGLSDEEIKKMQKDAEEHAEEDKKRKEEV) and 577-624 (NGGA…DPDK). A compositionally biased stretch (basic and acidic residues) spans 481–504 (EEIKKMQKDAEEHAEEDKKRKEEV). A compositionally biased stretch (low complexity) spans 577–605 (NGGAQGAAGQAGPQGPQNGGQPNNDNGSD). Over residues 615 to 624 (GDFHKVDPDK) the composition is skewed to basic and acidic residues.

Belongs to the heat shock protein 70 family.

Acts as a chaperone. The protein is Chaperone protein DnaK of Lactobacillus johnsonii (strain CNCM I-12250 / La1 / NCC 533).